We begin with the raw amino-acid sequence, 499 residues long: Lysine--tRNA ligase (499 aa).

Residues Glu-408 and Glu-415 each coordinate Mg(2+).

This sequence belongs to the class-II aminoacyl-tRNA synthetase family. In terms of assembly, homodimer. It depends on Mg(2+) as a cofactor.

The protein localises to the cytoplasm. It carries out the reaction tRNA(Lys) + L-lysine + ATP = L-lysyl-tRNA(Lys) + AMP + diphosphate. The polypeptide is Lysine--tRNA ligase (Bacillus mycoides (strain KBAB4) (Bacillus weihenstephanensis)).